The chain runs to 315 residues: Methenyltetrahydromethanopterin cyclohydrolase (315 aa).

The protein belongs to the MCH family.

It is found in the cytoplasm. The catalysed reaction is 5,10-methenyl-5,6,7,8-tetrahydromethanopterin + H2O = N(5)-formyl-5,6,7,8-tetrahydromethanopterin + H(+). It participates in one-carbon metabolism; methanogenesis from CO(2); 5,10-methenyl-5,6,7,8-tetrahydromethanopterin from CO(2): step 3/3. In terms of biological role, catalyzes the reversible interconversion of 5-formyl-H(4)MPT to methenyl-H(4)MPT(+). The chain is Methenyltetrahydromethanopterin cyclohydrolase from Methanosphaerula palustris (strain ATCC BAA-1556 / DSM 19958 / E1-9c).